The sequence spans 641 residues: Ribosomal oxygenase 1 (641 aa).

Residue M1 is modified to N-acetylmethionine. Disordered regions lie at residues 1 to 35 and 54 to 80; these read MDGLQASAGPLRRGRPKRRRKPQPHSGSVLALPLR and RTQTLPSENSEESRVESTADDLGDALP. The segment covering 12–23 has biased composition (basic residues); that stretch reads RRGRPKRRRKPQ. 3 positions are modified to phosphoserine: S60, S63, and S109. Residues 294-439 enclose the JmjC domain; it reads CSLRLLCPQA…DFLEAILPLA (146 aa). Residues H340, D342, and H405 each coordinate Fe cation.

It belongs to the ROX family. NO66 subfamily. In terms of assembly, interacts with SP7/OSX; the interaction is direct. Interacts with MYC. Interacts with PHF19; leading to its recruitment to H3K36me3 sites. Fe(2+) is required as a cofactor. As to expression, widely expressed. Overexpressed in lung carcinomas.

Its subcellular location is the nucleus. The protein localises to the nucleolus. The protein resides in the nucleoplasm. It catalyses the reaction N(6),N(6)-dimethyl-L-lysyl(36)-[histone H3] + 2 2-oxoglutarate + 2 O2 = L-lysyl(36)-[histone H3] + 2 formaldehyde + 2 succinate + 2 CO2. The enzyme catalyses N(6)-methyl-L-lysyl-[protein] + 2-oxoglutarate + O2 = L-lysyl-[protein] + formaldehyde + succinate + CO2. The catalysed reaction is L-histidyl-[protein] + 2-oxoglutarate + O2 = (3S)-3-hydroxy-L-histidyl-[protein] + succinate + CO2. In terms of biological role, oxygenase that can act as both a histone lysine demethylase and a ribosomal histidine hydroxylase. Specifically demethylates 'Lys-4' (H3K4me) and 'Lys-36' (H3K36me) of histone H3, thereby playing a central role in histone code. Preferentially demethylates trimethylated H3 'Lys-4' (H3K4me3) and monomethylated H3 'Lys-4' (H3K4me1) residues, while it has weaker activity for dimethylated H3 'Lys-36' (H3K36me2). Acts as a regulator of osteoblast differentiation via its interaction with SP7/OSX by demethylating H3K4me and H3K36me, thereby inhibiting SP7/OSX-mediated promoter activation. Also catalyzes demethylation of non-histone proteins, such as CGAS: demethylation of monomethylated CGAS promotes interaction between CGAS and PARP1, followed by PARP1 inactivation. Also catalyzes the hydroxylation of 60S ribosomal protein L8 on 'His-216', thereby playing a role in ribosome biogenesis. Participates in MYC-induced transcriptional activation. The polypeptide is Ribosomal oxygenase 1 (Homo sapiens (Human)).